The primary structure comprises 285 residues: Pantothenate synthetase (285 aa).

30–37 (MGFLHEGH) lines the ATP pocket. The Proton donor role is filled by H37. Residue Q61 participates in (R)-pantoate binding. Q61 serves as a coordination point for beta-alanine. 147 to 150 (GQKD) contributes to the ATP binding site. Q153 is a binding site for (R)-pantoate. ATP-binding positions include V176 and 184–187 (KSSR).

The protein belongs to the pantothenate synthetase family. In terms of assembly, homodimer.

It is found in the cytoplasm. It carries out the reaction (R)-pantoate + beta-alanine + ATP = (R)-pantothenate + AMP + diphosphate + H(+). The protein operates within cofactor biosynthesis; (R)-pantothenate biosynthesis; (R)-pantothenate from (R)-pantoate and beta-alanine: step 1/1. Functionally, catalyzes the condensation of pantoate with beta-alanine in an ATP-dependent reaction via a pantoyl-adenylate intermediate. This Listeria monocytogenes serotype 4b (strain F2365) protein is Pantothenate synthetase.